Consider the following 35-residue polypeptide: Kappa-theraphotoxin-Tb1a (35 aa).

3 cysteine pairs are disulfide-bonded: Cys-3-Cys-18, Cys-10-Cys-23, and Cys-17-Cys-30.

It belongs to the neurotoxin 10 (Hwtx-1) family. 59 (Tltx) subfamily. Monomer. In terms of tissue distribution, expressed by the venom gland.

The protein localises to the secreted. Its function is as follows. Blocks Kv4.2/KCND2 voltage-gated potassium channels (IC(50) is 193.0 nM) by shifting the voltage-dependence of channel activation to more depolarized potentials. The toxin is thought to bind to the S3-S4 linker region of the voltage sensor domain. This is Kappa-theraphotoxin-Tb1a from Theraphosa blondi (Goliath birdeating spider).